Here is a 109-residue protein sequence, read N- to C-terminus: Putative double-stranded DNA mimic protein plu2488 (109 aa).

This sequence belongs to the putative dsDNA mimic protein family.

Its function is as follows. May act as a double-stranded DNA (dsDNA) mimic. Probably regulates the activity of a dsDNA-binding protein. This Photorhabdus laumondii subsp. laumondii (strain DSM 15139 / CIP 105565 / TT01) (Photorhabdus luminescens subsp. laumondii) protein is Putative double-stranded DNA mimic protein plu2488.